The chain runs to 506 residues: NADH-quinone oxidoreductase subunit N (506 aa).

A run of 14 helical transmembrane segments spans residues 14–34, 40–60, 72–92, 109–129, 131–151, 166–186, 209–229, 256–276, 286–306, 314–334, 343–363, 385–405, 420–440, and 465–485; these read MVPE…DLFF, YVAL…ITLY, FVLD…AALI, GEYY…ASSV, FVTL…LVGI, VING…LYGI, LLLA…IATV, MAGF…VSVQ, MSIY…VVAL, LFAY…VALS, FYML…HGLI, AIVM…AGFI, AHYV…VYYF, and IVMS…MIGY.

It belongs to the complex I subunit 2 family. As to quaternary structure, NDH-1 is composed of 14 different subunits. Subunits NuoA, H, J, K, L, M, N constitute the membrane sector of the complex.

The protein resides in the cell membrane. The catalysed reaction is a quinone + NADH + 5 H(+)(in) = a quinol + NAD(+) + 4 H(+)(out). Functionally, NDH-1 shuttles electrons from NADH, via FMN and iron-sulfur (Fe-S) centers, to quinones in the respiratory chain. The immediate electron acceptor for the enzyme in this species is believed to be a menaquinone. Couples the redox reaction to proton translocation (for every two electrons transferred, four hydrogen ions are translocated across the cytoplasmic membrane), and thus conserves the redox energy in a proton gradient. The protein is NADH-quinone oxidoreductase subunit N of Bacillus anthracis.